A 435-amino-acid polypeptide reads, in one-letter code: Sex peptide receptor (435 aa).

The Extracellular portion of the chain corresponds to 1-93 (MDNYTDVLYQ…PLEYAMPLYG (93 aa)). The helical transmembrane segment at 94 to 114 (YCMPFLLIITIISNSLIVLVL) threads the bilayer. Topologically, residues 115-124 (SKKSMATPTN) are cytoplasmic. A helical transmembrane segment spans residues 125–145 (FVLMGMAICDMLTVIFPAPGL). At 146–168 (WYMYTFGNHYKPLHPVSMCLAYS) the chain is on the extracellular side. A helical membrane pass occupies residues 169 to 189 (IFNEIMPAMCHTISVWLTLAL). Residues 190–211 (AVQRYIYVCHAPMARTWCTMPR) lie on the Cytoplasmic side of the membrane. Residues 212–229 (VRRCTAYIALLAFLHQLP) form a helical membrane-spanning segment. The Extracellular segment spans residues 230 to 276 (RFFDRTYMPLVIEWNGSPTEVCHLETSMWVHDYIGVDLYYTSYYLFR). The helical transmembrane segment at 277-297 (VLFVHLLPCIILVTLNILLFA) threads the bilayer. The Cytoplasmic portion of the chain corresponds to 298–327 (AMRQAQERRKLLFRENRKKECKKLRETNCT). The helical transmembrane segment at 328–348 (TLMLIVVVSVFLLAEIPIAVV) threads the bilayer. Residues 349–368 (TAMHIVSSLIIEFLDYGLAN) are Extracellular-facing. Residues 369-389 (ICIMLTNFFLVFSYPINFGIY) traverse the membrane as a helical segment. The Cytoplasmic segment spans residues 390–435 (CGMSRQFRETFKEIFLGRLMAKKDSSTKYSIVNGARTCTNTNETVL).

The protein belongs to the G-protein coupled receptor 1 family. In terms of tissue distribution, in the female, expressed in the reproductive organs; strongly expressed in the spermathecae and the lower oviduct. No expression in the male reproductive organs. In the central nervous system of both sexes, it is expressed in the brain and ventral nerve cord (VNC); strongly expressed in the ventral regions of the suboesophageal ganglion, the cervical connective and in many nerve roots of the brain and VNC. Expressed in the s-LNvs and l-LNvs pdf neurons (at protein level).

It localises to the cell membrane. Receptor for two functionally unrelated ligands; SP (A70A) for controlling reproductive behaviors and MIP for controlling sleep behavior. MIP-SPR pathway functions as a sleep homeostat which perceives the need for sleep and stabilizes it by providing a slow-acting inhibitory input to the fly arousal system that involve the pigment dispersing factor (pdf) neurons. SP-SPR is one of the multiple SP pathways that induce female post-mating behavioral responses (PMR) such as the suppression of mating receptivity and initiation of egg laying. The PMR switch is achieved by mediating the synaptic output of neurons such as those expressing fruitless (fru), double sex (dsx) and pickpocket (ppk). The chain is Sex peptide receptor from Drosophila melanogaster (Fruit fly).